Reading from the N-terminus, the 334-residue chain is MKYLVTGAAGFIGFHVSKRLLEAGHQVVGIDNLNDYYDVSLKQARLELLAQPGFQFHKIDLADREGMTDLFASGHFERVFISPHRLAVRYSLENPHAYADSNLTGFLNILEGCRHNKIQHLLYASSSSVYGLNRKMPFSTDDSVDHPVSLYAATKKANELMAHTYSHLYGLPATGLRFFTVYGPWGRPDMALFKFTKAMLEGKSIDVYNYGKMKRDFTYIDDIAEAIIRLQDVIPHADTQWTVETGTPAASIAPYRVYNIGNSSPVELMDYIQALEDALGIEAKKNMLPLQPGDVLETSADTKALYEVIGFTPETTVKDGVKNFVNWYRDFYKV.

S126 is a binding site for substrate. The Proton acceptor role is filled by Y151.

It belongs to the NAD(P)-dependent epimerase/dehydratase family. dTDP-glucose dehydratase subfamily.

This is an uncharacterized protein from Escherichia coli O111:H-.